We begin with the raw amino-acid sequence, 373 residues long: MAENKHPDKPLKVLEQLGKEVLTEYLEKLVQSNVLKLKEEDKQKFNNAERSDKRWVFVDAMKKKHSKVGEMLLQTFFSVDPGSHHGEANLEMEEPEESLNTLKLCSPEEFTRLCREKTQEIYPIKEANGRTRKALIICNTEFKHLSLRYGANFDIIGMKGLLEDLGYDVVVKEELTAEGMESEMKDFAALSEHQTSDSTFLVLMSHGTLHGICGTMHSEKTPDVLQYDTIYQIFNNCHCPGLRDKPKVIIVQACRGGNSGEMWIRESSKPQLCRGVDLPRNMEADAVKLSHVEKDFIAFYSTTPHHLSYRDKTGGSYFITRLISCFRKHACSCHLFDIFLKVQQSFEKASIHSQMPTIDRATLTRYFYLFPGN.

A required for LPS-binding region spans residues 1 to 59; sequence MAENKHPDKPLKVLEQLGKEVLTEYLEKLVQSNVLKLKEEDKQKFNNAERSDKRWVFVD. Residues 1–80 constitute a propeptide that is removed on maturation; sequence MAENKHPDKP…MLLQTFFSVD (80 aa). One can recognise a CARD domain in the interval 1–91; that stretch reads MAENKHPDKP…GSHHGEANLE (91 aa). S83 carries the post-translational modification Phosphoserine. Residues H206 and C254 contribute to the active site. The propeptide occupies 267–285; the sequence is SSKPQLCRGVDLPRNMEAD. R310 bears the (Microbial infection) ADP-riboxanated arginine mark.

The protein belongs to the peptidase C14A family. As to quaternary structure, heterotetramer that consists of two anti-parallel arranged heterodimers, each one formed by a 20 kDa (Caspase-4 subunit p20) and a 10 kDa (Caspase-4 subunit p10) subunit. Upon direct LPS-binding, forms large homooligomers, resulting in its activation. These oligomers are often referred to as 'non-canonical inflammasomes'. In its precursor form, interacts with TMEM214; this interaction is required for association with the endoplasmic reticulum membrane. Interacts with CASP1. Interacts with NOD2. Interacts with Serpinb1a, Serpinb1b and Serpinb1c; these interactions regulate CASP4 activity. In terms of assembly, heterotetramer that consists of two anti-parallel arranged heterodimers, each one formed by a 20 kDa (Caspase-4 subunit p20) and a 10 kDa (Caspase-4 subunit p10) subunit. Post-translationally, in response to activation signals, undergoes autoproteolytic cleavage and activation. (Microbial infection) ADP-riboxanation by S.flexneri OspC3 blocks CASP4 autoprocessing, preventing CASP4 activation and ability to recognize and cleave GSDMD, thereby thwarting the inflammasome/pyroptosis-mediated defense. As to expression, widely expressed, including in thymus, lung and spleen (at protein level). Very low levels, if any, in the brain.

Its subcellular location is the cytoplasm. The protein localises to the cytosol. It is found in the endoplasmic reticulum membrane. It localises to the mitochondrion. The protein resides in the inflammasome. Its subcellular location is the secreted. It carries out the reaction Strict requirement for Asp at the P1 position and has a preferred cleavage sequence of (Ile/Leu/Val/Phe)-Gly-His-Asp-|-.. With respect to regulation, activated by homooligomerization induced by direct binding to cytosolic LPS, in a TLR4-independent manner. In addition to LPS, CASP4/CASP11 may also be activated by oxidized phospholipid 1-palmitoyl-2-arachidonoyl- sn-glycero-3-phosphorylcholine, an oxidized phospholipid (oxPAPC), in dendritic cells, promoting adaptive immunity. The role of oxPAPC is however unclear and another report suggests that oxPAPC competes with LPS-binding and inhibits the non-canonical inflammasome in macrophages. In terms of biological role, inflammatory caspase that acts as the effector of the non-canonical inflammasome by mediating lipopolysaccharide (LPS)-induced pyroptosis. Also indirectly activates the NLRP3 and NLRP6 inflammasomes. Acts as a thiol protease that cleaves a tetrapeptide after an Asp residue at position P1: catalyzes cleavage of CGAS and GSDMD. In contrast to its human ortholog, does not cleave IL18. Effector of the non-canonical inflammasome independently of NLRP3 inflammasome and CASP1: the non-canonical inflammasome promotes pyroptosis through GSDMD cleavage without involving secretion of cytokine IL1B and IL18. In the non-canonical inflammasome, CASP4/CASP11 is activated by direct binding to the lipid A moiety of LPS without the need of an upstream sensor. LPS-binding promotes CASP4/CASP11 activation and CASP4/CASP11-mediated cleavage of GSDMD, followed by pyroptosis of infected cells and their extrusion into the gut lumen. Also indirectly promotes secretion of mature cytokines (IL1A, IL18 and HMGB1) downstream of GSDMD-mediated pyroptosis via activation of the NLRP3 and NLRP6 inflammasomes. Involved in NLRP3-dependent CASP1 activation and IL1B and IL18 secretion in response to non-canonical activators, such as UVB radiation or cholera enterotoxin. Involved in NLRP6 inflammasome-dependent activation in response to lipoteichoic acid (LTA), a cell-wall component of Gram-positive bacteria, which leads to CASP1 activation and IL1B and IL18 secretion. Involved in LPS-induced IL6 secretion; this activity may not require caspase enzymatic activity. The non-canonical inflammasome is required for innate immunity to cytosolic, but not vacuolar, bacteria. Plays a crucial role in the restriction of S.typhimurium replication in colonic epithelial cells during infection. Activation of the non-canonical inflammasome in brain endothelial cells can lead to excessive pyroptosis, leading to blood-brain barrier breakdown. Pyroptosis limits bacterial replication, while cytokine secretion promotes the recruitment and activation of immune cells and triggers mucosal inflammation. May also act as an activator of adaptive immunity in dendritic cells, following activation by oxidized phospholipid 1-palmitoyl-2-arachidonoyl- sn-glycero-3-phosphorylcholine, an oxidized phospholipid (oxPAPC). Cleavage of GSDMD is not strictly dependent on the consensus cleavage site but depends on an exosite interface on CASP4/CASP11 that recognizes and binds the Gasdermin-D, C-terminal (GSDMD-CT) part. In contrast, it does not directly process IL1B. During non-canonical inflammasome activation, cuts CGAS and may play a role in the regulation of antiviral innate immune activation. The protein is Caspase-4 of Mus musculus (Mouse).